The sequence spans 187 residues: Casparian strip membrane protein 5 (187 aa).

Residues 1 to 24 lie on the Cytoplasmic side of the membrane; the sequence is MKSGQAEIVETSKGIQKSGLMSRR. Residues 25 to 45 traverse the membrane as a helical segment; sequence IAILEFILRIVAFFNTIGSAI. Over 46–74 the chain is Extracellular; sequence LMGTTHETLPFFTQFIRFQAEYNDLPALT. A helical membrane pass occupies residues 75–95; it reads FFVVANAVVSGYLIMSLTLAF. At 96–107 the chain is on the cytoplasmic side; sequence VHIVKRKTQNTR. Residues 108–128 form a helical membrane-spanning segment; that stretch reads ILLIVLDVAMLGLLSAGASSA. The Extracellular segment spans residues 129-161; it reads AAIVYLAHNGNNKTNWFAICQQFNSFCERISGS. Residue asparagine 140 is glycosylated (N-linked (GlcNAc...) asparagine). A helical transmembrane segment spans residues 162 to 182; sequence LIGSFIAVVLLILLILLSAIA. Over 183–187 the chain is Cytoplasmic; the sequence is LSRRH.

The protein belongs to the Casparian strip membrane proteins (CASP) family. Homodimer and heterodimers.

It is found in the cell membrane. In terms of biological role, regulates membrane-cell wall junctions and localized cell wall deposition. Required for establishment of the Casparian strip membrane domain (CSD) and the subsequent formation of Casparian strips, a cell wall modification of the root endodermis that determines an apoplastic barrier between the intraorganismal apoplasm and the extraorganismal apoplasm and prevents lateral diffusion. The polypeptide is Casparian strip membrane protein 5 (Arabidopsis lyrata subsp. lyrata (Lyre-leaved rock-cress)).